The primary structure comprises 37 residues: Large ribosomal subunit protein bL36 (37 aa).

It belongs to the bacterial ribosomal protein bL36 family.

In Alkalilimnicola ehrlichii (strain ATCC BAA-1101 / DSM 17681 / MLHE-1), this protein is Large ribosomal subunit protein bL36.